The following is a 134-amino-acid chain: Prefoldin subunit alpha (134 aa).

The protein belongs to the prefoldin subunit alpha family. As to quaternary structure, heterohexamer of two alpha and four beta subunits.

It localises to the cytoplasm. In terms of biological role, molecular chaperone capable of stabilizing a range of proteins. Seems to fulfill an ATP-independent, HSP70-like function in archaeal de novo protein folding. In Pyrobaculum calidifontis (strain DSM 21063 / JCM 11548 / VA1), this protein is Prefoldin subunit alpha.